We begin with the raw amino-acid sequence, 354 residues long: Protein-glutamate methylesterase/protein-glutamine glutaminase of group 3 operon (354 aa).

The region spanning 3 to 121 (RILLATSTVE…MQLEQPAIEK (119 aa)) is the Response regulatory domain. In terms of domain architecture, CheB-type methylesterase spans 158 to 340 (PIGIVGIAAS…LESIAENITA (183 aa)). Active-site residues include Ser167, His194, and Asp287.

Belongs to the CheB family.

The protein resides in the cytoplasm. The catalysed reaction is [protein]-L-glutamate 5-O-methyl ester + H2O = L-glutamyl-[protein] + methanol + H(+). It carries out the reaction L-glutaminyl-[protein] + H2O = L-glutamyl-[protein] + NH4(+). In terms of biological role, involved in chemotaxis. Part of a chemotaxis signal transduction system that modulates chemotaxis in response to various stimuli. Catalyzes the demethylation of specific methylglutamate residues introduced into the chemoreceptors (methyl-accepting chemotaxis proteins or MCP) by CheR. Also mediates the irreversible deamidation of specific glutamine residues to glutamic acid. The protein is Protein-glutamate methylesterase/protein-glutamine glutaminase of group 3 operon of Rhizobium meliloti (strain 1021) (Ensifer meliloti).